Here is a 241-residue protein sequence, read N- to C-terminus: Tetraspanin-1 (241 aa).

Residues 1-11 (MQCFSFIKTMM) are Cytoplasmic-facing. Residues 12-34 (ILFNLLIFLCGAALLAVGIWVSI) traverse the membrane as a helical segment. At 35 to 53 (DGASFLKIFGPLSSSAMQF) the chain is on the extracellular side. Residues 54–76 (VNVGYFLIAAGVVVFALGFLGCY) traverse the membrane as a helical segment. Residues 77 to 88 (GAKTESKCALMT) lie on the Cytoplasmic side of the membrane. The helical transmembrane segment at 89-111 (FFFILLLIFIAEVAAAVVALVYT) threads the bilayer. Residues 112–214 (TMAEHFLTLL…LYDIRTNAVT (103 aa)) lie on the Extracellular side of the membrane. Residues Asn-141, Asn-154, Asn-178, and Asn-184 are each glycosylated (N-linked (GlcNAc...) asparagine). Residues 215–237 (VGGVAAGIGGLELAAMIVSMYLY) traverse the membrane as a helical segment. At 238 to 241 (CNLQ) the chain is on the cytoplasmic side.

It belongs to the tetraspanin (TM4SF) family. As to quaternary structure, interacts with SLC19A2. Interacts with NTRK1/TRKA.

The protein localises to the lysosome membrane. Functionally, structural component of specialized membrane microdomains known as tetraspanin-enriched microdomains (TERMs), which act as platforms for receptor clustering and signaling. Participates thereby in diverse biological functions such as cell signal transduction, adhesion, migration and protein trafficking. Regulates neuronal differentiation in response to NGF by facilitating NGF-mediated activation of NTRK1/TRKA receptor tyrosine kinase and subsequent downstream signaling pathways. Plays a role in the inhibition of TNFalpha-induced apoptosis. Mechanistically, inhibits the NF-kappa-B signaling pathway by blocking phosphorylation of CHUK. Also promotes the stability of the thiamine transporter 1/SLC19A2 in intestinal epithelial cells leading to an increase of thiamine uptake process. The polypeptide is Tetraspanin-1 (TSPAN1) (Pongo abelii (Sumatran orangutan)).